Reading from the N-terminus, the 112-residue chain is UPF0060 membrane protein Arth_4238 (112 aa).

4 consecutive transmembrane segments (helical) span residues 7–27 (ILLFVLAAAAEIGGAWLVWQA), 33–53 (EWWWAGLGVLALGVYGFAATL), 62–82 (ILAAYGGVFVAGSLAWGMVFD), and 88–108 (RWDIIGSVICLLGVAVIMFAP).

Belongs to the UPF0060 family.

Its subcellular location is the cell membrane. In Arthrobacter sp. (strain FB24), this protein is UPF0060 membrane protein Arth_4238.